The chain runs to 544 residues: Propane 2-monooxygenase, hydroxylase component large subunit (544 aa).

Fe cation is bound by residues glutamate 97, glutamate 127, histidine 130, glutamate 192, glutamate 226, and histidine 229.

It belongs to the TmoA/XamoA family. As to quaternary structure, the propane 2-monooxygenase multicomponent enzyme system is composed of an electron transfer component and a monooxygenase component interacting with the effector protein PrmD. The electron transfer component is composed of a reductase (PrmB), and the monooxygenase component is formed by a large subunit (PrmA) and a small subunit (PrmC). Probably requires the presence of the chaperonin-like protein PrmG to ensure a productive folding, resulting of a soluble PrmA, which leads to the active form of PrmABCD. It depends on Fe(2+) as a cofactor.

The catalysed reaction is propane + NADH + O2 + H(+) = propan-2-ol + NAD(+) + H2O. Functionally, component of the propane 2-monooxygenase multicomponent enzyme system which is involved in the degradation of propane via the O2-dependent hydroxylation of propane. Also able to catalyze the oxidation the water contaminant N-nitrosodimethylamine (NDMA). This is Propane 2-monooxygenase, hydroxylase component large subunit from Rhodococcus jostii (strain RHA1).